Consider the following 144-residue polypeptide: UPF0735 ACT domain-containing protein LSEI_1046 (144 aa).

The region spanning 68–143 (VISLMLHHDR…GVSDVHLVSV (76 aa)) is the ACT domain.

The protein belongs to the UPF0735 family.

The chain is UPF0735 ACT domain-containing protein LSEI_1046 from Lacticaseibacillus paracasei (strain ATCC 334 / BCRC 17002 / CCUG 31169 / CIP 107868 / KCTC 3260 / NRRL B-441) (Lactobacillus paracasei).